We begin with the raw amino-acid sequence, 387 residues long: EARP-interacting protein homolog (387 aa).

5 WD repeats span residues 132 to 172, 182 to 222, 226 to 266, 270 to 310, and 345 to 385; these read TAHG…SKAV, KGQL…QIYC, AHGQ…DPVK, EHSH…SEPF, and EHED…KYHI.

It belongs to the WD repeat EIPR1 family.

This chain is EARP-interacting protein homolog, found in Gekko japonicus (Schlegel's Japanese gecko).